The sequence spans 40 residues: Large ribosomal subunit protein bL36B (40 aa).

This sequence belongs to the bacterial ribosomal protein bL36 family.

This chain is Large ribosomal subunit protein bL36B, found in Arthrobacter sp. (strain FB24).